Reading from the N-terminus, the 1933-residue chain is Protein TIC 214 (1933 aa).

6 consecutive transmembrane segments (helical) span residues 18–38 (IVNSVVVVGLYYGLLTTFSIG), 60–80 (ATTGFITGQLIMFISIYYAPL), 87–107 (PHTITVLALPYLFVYFIFYTD), 128–148 (FSIQCVFLNNLIFQLFNHFIL), 176–196 (VGWLIGHILFWKWLGLVLVWI), and 230–250 (IFYILVILIWFYLGGKIPAPL). Disordered regions lie at residues 266–291 (AKGKKKKRGKGEEEGDVEKEDEVGVG), 473–514 (KTKS…SRDN), 808–832 (THREEKKKRKKDEKNEKNAKNAEDP), and 1066–1121 (ESFT…SSNA). Acidic residues predominate over residues 278-289 (EEGDVEKEDEVG). The span at 476-487 (SLSPEKTSGDNL) shows a compositional bias: polar residues. Composition is skewed to basic and acidic residues over residues 488–514 (ETSRDNLETSRDNLETSRDNLETSRDN) and 819–832 (DEKNEKNAKNAEDP). Positions 1066–1078 (ESFTQISSPSSTN) are enriched in polar residues. Over residues 1105 to 1115 (KEKKKKKRSLK) the composition is skewed to basic residues. The helical transmembrane segment at 1135–1155 (LPVYLKLFIQRIYTGIFFSII) threads the bilayer. Positions 1562-1642 (NADNEKNEKK…SAESTTKKVT (81 aa)) are disordered. Residues 1564-1642 (DNEKNEKKEA…SAESTTKKVT (79 aa)) are compositionally biased toward basic and acidic residues.

The protein belongs to the TIC214 family. Part of the Tic complex.

It localises to the plastid. Its subcellular location is the chloroplast inner membrane. Functionally, involved in protein precursor import into chloroplasts. May be part of an intermediate translocation complex acting as a protein-conducting channel at the inner envelope. The sequence is that of Protein TIC 214 from Jasminum nudiflorum (Winter jasmine).